A 501-amino-acid chain; its full sequence is METNTMSQQEENQQIAARKVKLEALREAGVNPYPSGFKPDIDLASVSRANGNEMDPATLERVSVKVAGRIMLLRNFGKLTFATLQDESGRLQISAQRDVVGAELYSTVFRKIEVGDILGVEGHLFRTKVGELTVQVERFELLSKAVRPLPEKFHGLEDVETRYRQRYVDLIVNTEVREIFKTRSRVISRIRQFMEHRGFLEVETPMMHPIPGGATARPFVTHHNALDTDLYLRIAPELYLKRLIVGGFERVFEINRNFRNEGLSPRHNPEFTMMEFYQAYTDYRELMDFTEALVQDVVKDVNEGELTVAYQGQELDFSGPWARLTPAEAIVRYMEADAARITERGYLESLAESLGIKAETSWDDGMLLLTIFEEGVEHKLMAPTFIIDYPISVSPLSRRSDDNPDIAERFELFIAGREIANAFSELNDPADQASRFQKQVEAKDAGNEEAMHFDADYIRALEYGMPPTGGEGIGIDRLVMLLTDAANIREVLLFPQMKREG.

Mg(2+) is bound by residues glutamate 411 and glutamate 418.

This sequence belongs to the class-II aminoacyl-tRNA synthetase family. Homodimer. It depends on Mg(2+) as a cofactor.

The protein resides in the cytoplasm. It catalyses the reaction tRNA(Lys) + L-lysine + ATP = L-lysyl-tRNA(Lys) + AMP + diphosphate. This chain is Lysine--tRNA ligase, found in Magnetococcus marinus (strain ATCC BAA-1437 / JCM 17883 / MC-1).